The following is a 707-amino-acid chain: Choline transporter-like protein 4 (707 aa).

Over 1-32 the chain is Cytoplasmic; that stretch reads MGKKQKENEAYGNSAKYDPSFRGPIKNRGCTD. The chain crosses the membrane as a helical span at residues 33-53; it reads IICCVLFLVFILGYIVVGLVA. At 54–227 the chain is on the extracellular side; it reads WVYGDPRQVL…KIFEDFAQSW (174 aa). Asn67, Asn185, Asn195, and Asn196 each carry an N-linked (GlcNAc...) asparagine glycan. The chain crosses the membrane as a helical span at residues 228–248; sequence YWILVALGVALVLSLLFILLL. The Cytoplasmic segment spans residues 249–250; it reads RL. A helical membrane pass occupies residues 251 to 271; that stretch reads VAAPLVLLLIVGVLAVLAYGI. The Extracellular portion of the chain corresponds to 272–307; that stretch reads YHCWQQYRELRDQGVSITQLGFTANLSAYQNVKETW. N-linked (GlcNAc...) asparagine glycosylation is present at Asn296. The chain crosses the membrane as a helical span at residues 308–328; the sequence is LAALIILAVLEGVLLLMLIFL. Topologically, residues 329–356 are cytoplasmic; that stretch reads RQRIRIAIALLKEASRAVGQMMSTMFYP. Residues 357 to 377 traverse the membrane as a helical segment; sequence LVTFVLLVICIGYWAVTALYL. Residues 378–452 are Extracellular-facing; that stretch reads ATSGQPQYVY…GILGLFWTVN (75 aa). N-linked (GlcNAc...) asparagine glycosylation is found at Asn391, Asn403, and Asn413. Residues 453–473 form a helical membrane-spanning segment; the sequence is WVLALGQCVLAGAFASFYWAF. The Cytoplasmic portion of the chain corresponds to 474–498; it reads HKPRDIPTFPLSSAFIRTLRYHTGS. A helical transmembrane segment spans residues 499–519; sequence LAFGALILTLVQIARVILEYI. Residues 520–557 are Extracellular-facing; the sequence is DHKLRGSQNPVARCIICCFKCCLWCLEKFIKFLNRNAY. The chain crosses the membrane as a helical span at residues 558–578; it reads IMIAIYGKNFCVSAKNAFMLL. At 579 to 594 the chain is on the cytoplasmic side; that stretch reads MRNVVRVVVLDKVTDL. The helical transmembrane segment at 595–615 threads the bilayer; sequence LLFFGKLLVVGGVGVLSFFFF. Over 616-635 the chain is Extracellular; sequence SGRIKGLGKDFKNPDLNYYW. The chain crosses the membrane as a helical span at residues 636 to 656; the sequence is LPIMTSIMGAYVIASGFFSVF. Over 657–707 the chain is Cytoplasmic; the sequence is GMCVDTLFLCFLEDLERNDGSQERPYYMPKALLKILGKKNEVPTGGKNRKK.

It belongs to the CTL (choline transporter-like) family. N-glycosylated; N-glycosylation of Asn-67 and Asn-391 is required for a proper thiamine pyrophosphate uptake. As to expression, highly expressed in intestine, kidney and stomach. Also expressed in testis and lung.

The protein localises to the membrane. The protein resides in the apical cell membrane. The enzyme catalyses choline(out) + n H(+)(in) = choline(in) + n H(+)(out). It carries out the reaction thiamine diphosphate(out) = thiamine diphosphate(in). Choline transporter that plays a role in the choline-acetylcholine system and is required to the efferent innervation of hair cells in the olivocochlear bundle for the maintenance of physiological function of outer hair cells and the protection of hair cells from acoustic injury. Also described as a thiamine pyrophosphate transporter in colon, may mediate the absorption of microbiota-generated thiamine pyrophosphate and contribute to host thiamine (vitamin B1) homeostasis. This chain is Choline transporter-like protein 4, found in Rattus norvegicus (Rat).